The following is a 127-amino-acid chain: Cytochrome c' (127 aa).

Residue Q1 is modified to Pyrrolidone carboxylic acid. Heme c-binding residues include R12, Q13, D67, C116, C119, and H120.

Homodimer. In terms of processing, binds 1 heme c group covalently per subunit.

The protein resides in the periplasm. Its function is as follows. Cytochrome c' is the most widely occurring bacterial c-type cytochrome. Cytochromes c' are high-spin proteins and the heme has no sixth ligand. Their exact function is not known. In Alcaligenes xylosoxydans xylosoxydans (Achromobacter xylosoxidans), this protein is Cytochrome c'.